A 157-amino-acid chain; its full sequence is Transcription elongation factor GreA (157 aa).

Positions 47–75 (SGEYEDAKKAQALLEGRIRELKHLLSRAE) form a coiled coil.

Belongs to the GreA/GreB family.

Functionally, necessary for efficient RNA polymerase transcription elongation past template-encoded arresting sites. The arresting sites in DNA have the property of trapping a certain fraction of elongating RNA polymerases that pass through, resulting in locked ternary complexes. Cleavage of the nascent transcript by cleavage factors such as GreA or GreB allows the resumption of elongation from the new 3'terminus. GreA releases sequences of 2 to 3 nucleotides. This chain is Transcription elongation factor GreA, found in Chloroflexus aurantiacus (strain ATCC 29366 / DSM 635 / J-10-fl).